Here is a 317-residue protein sequence, read N- to C-terminus: Zinc finger protein 771 (317 aa).

A Glycyl lysine isopeptide (Lys-Gly) (interchain with G-Cter in SUMO2) cross-link involves residue Lys33. 8 C2H2-type zinc fingers span residues 63–85 (HACP…ARTH), 91–113 (FACT…GRTH), 119–141 (YQCP…RRRH), 147–169 (YACA…LRVH), 175–197 (YACP…RRTH), 203–225 (YACA…RRVH), 231–253 (HRCA…ARTH), and 259–281 (YPCT…RRAH).

The protein belongs to the krueppel C2H2-type zinc-finger protein family.

It is found in the nucleus. In terms of biological role, may be involved in transcriptional regulation. The protein is Zinc finger protein 771 (Znf771) of Mus musculus (Mouse).